A 429-amino-acid chain; its full sequence is Enolase (429 aa).

Gln-163 serves as a coordination point for (2R)-2-phosphoglycerate. The Proton donor role is filled by Glu-205. Mg(2+) contacts are provided by Asp-242, Glu-287, and Asp-314. Positions 339, 368, 369, and 390 each coordinate (2R)-2-phosphoglycerate. Lys-339 functions as the Proton acceptor in the catalytic mechanism.

The protein belongs to the enolase family. It depends on Mg(2+) as a cofactor.

It localises to the cytoplasm. It is found in the secreted. The protein localises to the cell surface. It catalyses the reaction (2R)-2-phosphoglycerate = phosphoenolpyruvate + H2O. It functions in the pathway carbohydrate degradation; glycolysis; pyruvate from D-glyceraldehyde 3-phosphate: step 4/5. Catalyzes the reversible conversion of 2-phosphoglycerate (2-PG) into phosphoenolpyruvate (PEP). It is essential for the degradation of carbohydrates via glycolysis. The sequence is that of Enolase from Anaeromyxobacter sp. (strain Fw109-5).